The chain runs to 129 residues: MFIDRLDHLVLTVSDIEKTCNFYENILGMKVITFGKDNERKALTFGNQKINLHKKGAEFEPKALLPTAGSADLCFITITPLHEVITELFQKNITIEEGPCERTGALSKPILSVYIRDPDYNLIEISNYK.

The 124-residue stretch at 5-128 (RLDHLVLTVS…DYNLIEISNY (124 aa)) folds into the VOC domain.

Belongs to the glyoxalase I family.

In Dictyostelium discoideum (Social amoeba), this protein is Glyoxalase domain-containing protein 5 homolog (glod5).